Reading from the N-terminus, the 72-residue chain is Translation initiation factor IF-1 (72 aa).

The S1-like domain occupies 1–72 (MAKEEQIELE…TKGRITFRMK (72 aa)).

This sequence belongs to the IF-1 family. In terms of assembly, component of the 30S ribosomal translation pre-initiation complex which assembles on the 30S ribosome in the order IF-2 and IF-3, IF-1 and N-formylmethionyl-tRNA(fMet); mRNA recruitment can occur at any time during PIC assembly.

Its subcellular location is the cytoplasm. In terms of biological role, one of the essential components for the initiation of protein synthesis. Stabilizes the binding of IF-2 and IF-3 on the 30S subunit to which N-formylmethionyl-tRNA(fMet) subsequently binds. Helps modulate mRNA selection, yielding the 30S pre-initiation complex (PIC). Upon addition of the 50S ribosomal subunit IF-1, IF-2 and IF-3 are released leaving the mature 70S translation initiation complex. The chain is Translation initiation factor IF-1 from Alcanivorax borkumensis (strain ATCC 700651 / DSM 11573 / NCIMB 13689 / SK2).